We begin with the raw amino-acid sequence, 334 residues long: Antho-RFamide neuropeptides (334 aa).

The signal sequence occupies residues 1–26; it reads MLVAMTTASYVTILVTLLFHILTINA. A propeptide spanning residues 27–116 is cleaved from the precursor; the sequence is KTVTKRAKET…REFQGRFGRE (90 aa). Composition is skewed to basic and acidic residues over residues 115–289 and 303–334; these read REQG…RELL and PQTRFRDVQMTRRNVAKKDKIEESNDEEANKS. The tract at residues 115–334 is disordered; that stretch reads REQGRFGREE…ESNDEEANKS (220 aa). F120 carries the phenylalanine amide modification. A propeptide spanning residues 122–125 is cleaved from the precursor; the sequence is REED. F129 bears the Phenylalanine amide mark. The propeptide occupies 131-134; the sequence is REED. F138 carries the post-translational modification Phenylalanine amide. Positions 140–142 are excised as a propeptide; that stretch reads REE. Residue F146 is modified to Phenylalanine amide. Positions 148–151 are excised as a propeptide; the sequence is REED. Phenylalanine amide is present on F155. Positions 157-160 are excised as a propeptide; that stretch reads REED. A Phenylalanine amide modification is found at F164. A propeptide spanning residues 166-169 is cleaved from the precursor; the sequence is REED. A Phenylalanine amide modification is found at F173. Positions 175–178 are excised as a propeptide; sequence REEE. At F182 the chain carries Phenylalanine amide. A propeptide spanning residues 184-187 is cleaved from the precursor; that stretch reads REED. Position 191 is a phenylalanine amide (F191). Residues 193–196 constitute a propeptide that is removed on maturation; that stretch reads REEE. A Phenylalanine amide modification is found at F200. Positions 202–205 are excised as a propeptide; sequence REED. F209 carries the phenylalanine amide modification. The propeptide occupies 211–214; it reads REED. A Phenylalanine amide modification is found at F218. Positions 220–223 are excised as a propeptide; that stretch reads REEE. A Phenylalanine amide modification is found at F227. Positions 229–233 are excised as a propeptide; it reads KRDED. F237 is subject to Phenylalanine amide. Residues 239–242 constitute a propeptide that is removed on maturation; the sequence is KRED. Position 246 is a phenylalanine amide (F246). Residues 248-252 constitute a propeptide that is removed on maturation; the sequence is KRDED. F256 bears the Phenylalanine amide mark. A propeptide spanning residues 258-262 is cleaved from the precursor; it reads KRDED. Phenylalanine amide is present on F266. Residues 268–271 constitute a propeptide that is removed on maturation; that stretch reads KRED. At F275 the chain carries Phenylalanine amide. Positions 277–280 are excised as a propeptide; the sequence is KRED. At F284 the chain carries Phenylalanine amide. A propeptide spanning residues 286–334 is cleaved from the precursor; the sequence is RELLAKLNKRTTSIQEDPQTRFRDVQMTRRNVAKKDKIEESNDEEANKS.

The protein belongs to the FARP (FMRFamide related peptide) family. As to expression, neurons associated with smooth muscle fibers.

It is found in the secreted. In terms of biological role, not known but it could act as a transmitter at neuromuscular synapses. The chain is Antho-RFamide neuropeptides from Calliactis parasitica (Sea anemone).